Consider the following 178-residue polypeptide: PEST proteolytic signal-containing nuclear protein (178 aa).

Residues 1 to 15 (MADGKAGEEKPEKPQ) show a composition bias toward basic and acidic residues. The interval 1–82 (MADGKAGEEK…FAIGSQTARK (82 aa)) is disordered. A2 carries the post-translational modification N-acetylalanine. The span at 37-47 (SSSNGGESSSR) shows a compositional bias: low complexity. S53 is modified (phosphoserine). K64 carries the post-translational modification N6-acetyllysine. S77, S87, and S119 each carry phosphoserine. Positions 134-158 (NIGRDTPTSAGPNSFNKGKHGFSDN) are disordered. T139 carries the post-translational modification Phosphothreonine. A compositionally biased stretch (polar residues) spans 139 to 149 (TPTSAGPNSFN). S147 carries the post-translational modification Phosphoserine. K150 and K152 each carry N6-acetyllysine.

In terms of assembly, interacts with UHRF2/NIRF. Ubiquitinated; mediated by UHRF2 and leading to its subsequent proteasomal degradation. Post-translationally, N-terminally acetylated in a HYPK-dependent manner by the NatA acetyltransferase complex which is composed of NAA10 and NAA15.

The protein localises to the nucleus. May be involved in cell cycle regulation. The chain is PEST proteolytic signal-containing nuclear protein (Pcnp) from Mus musculus (Mouse).